Here is a 389-residue protein sequence, read N- to C-terminus: Choline/ethanolaminephosphotransferase 1 (389 aa).

Residues 40–60 (VFPLWMPPNMITLMGFMFLVT) form a helical membrane-spanning segment. N48 serves as a coordination point for CDP-choline. D95 and D98 together coordinate Mg(2+). R103 lines the CDP-choline pocket. D116 serves as a coordination point for Mg(2+). H117 (proton acceptor) is an active-site residue. D120 lines the Mg(2+) pocket. 7 helical membrane passes run 141-161 (TFWFWVISAIPFYGATWEHYF), 176-196 (GLALIFVSHFFTAIVGAEWWA), 221-241 (VLYMMIAFAVIPTVAFNVTNV), 252-272 (MVLALAMLYPFVVLLGGVLIW), 280-300 (LIATYPHLVVLGTGLAFGFLV), 322-344 (SLLYLPFALANALTARLNAGVPL), and 350-370 (VLLGYCIFTVSLYLHFATSVI).

This sequence belongs to the CDP-alcohol phosphatidyltransferase class-I family. Requires Mg(2+) as cofactor. Mn(2+) is required as a cofactor.

The protein resides in the membrane. The enzyme catalyses CDP-ethanolamine + a 1,2-diacyl-sn-glycerol = a 1,2-diacyl-sn-glycero-3-phosphoethanolamine + CMP + H(+). It catalyses the reaction CDP-choline + a 1,2-diacyl-sn-glycerol = a 1,2-diacyl-sn-glycero-3-phosphocholine + CMP + H(+). It functions in the pathway phospholipid metabolism; phosphatidylethanolamine biosynthesis; phosphatidylethanolamine from ethanolamine: step 3/3. It participates in phospholipid metabolism; phosphatidylcholine biosynthesis; phosphatidylcholine from phosphocholine: step 2/2. Catalyzes both phosphatidylcholine and phosphatidylethanolamine biosynthesis from CDP-choline and CDP-ethanolamine, respectively. Has a higher cholinephosphotransferase activity than ethanolaminephosphotransferase activity. In Arabidopsis thaliana (Mouse-ear cress), this protein is Choline/ethanolaminephosphotransferase 1 (AAPT1).